The chain runs to 54 residues: Large ribosomal subunit protein bL32c (54 aa).

The segment covering 1-25 (MAVPKKRTSKAKKNSRKANWKRKAA) has biased composition (basic residues). A disordered region spans residues 1–26 (MAVPKKRTSKAKKNSRKANWKRKAAK).

Belongs to the bacterial ribosomal protein bL32 family.

It localises to the plastid. It is found in the chloroplast. The sequence is that of Large ribosomal subunit protein bL32c from Thalassiosira pseudonana (Marine diatom).